The sequence spans 360 residues: Phosphoserine aminotransferase (360 aa).

Residue Arg-41 coordinates L-glutamate. Pyridoxal 5'-phosphate-binding positions include 75-76, Trp-99, Thr-152, Asp-171, and Gln-194; that span reads AS. Lys-195 is subject to N6-(pyridoxal phosphate)lysine. Residue 236–237 participates in pyridoxal 5'-phosphate binding; it reads NT.

Belongs to the class-V pyridoxal-phosphate-dependent aminotransferase family. SerC subfamily. In terms of assembly, homodimer. Pyridoxal 5'-phosphate serves as cofactor.

The protein localises to the cytoplasm. The catalysed reaction is O-phospho-L-serine + 2-oxoglutarate = 3-phosphooxypyruvate + L-glutamate. It catalyses the reaction 4-(phosphooxy)-L-threonine + 2-oxoglutarate = (R)-3-hydroxy-2-oxo-4-phosphooxybutanoate + L-glutamate. Its pathway is amino-acid biosynthesis; L-serine biosynthesis; L-serine from 3-phospho-D-glycerate: step 2/3. It participates in cofactor biosynthesis; pyridoxine 5'-phosphate biosynthesis; pyridoxine 5'-phosphate from D-erythrose 4-phosphate: step 3/5. Its function is as follows. Catalyzes the reversible conversion of 3-phosphohydroxypyruvate to phosphoserine and of 3-hydroxy-2-oxo-4-phosphonooxybutanoate to phosphohydroxythreonine. This is Phosphoserine aminotransferase from Porphyromonas gingivalis (strain ATCC 33277 / DSM 20709 / CIP 103683 / JCM 12257 / NCTC 11834 / 2561).